A 90-amino-acid polypeptide reads, in one-letter code: UPF0237 protein PAE3582 (90 aa).

Residues 5-74 (VVSVLGADRV…LEEEGKRLGV (70 aa)) enclose the ACT domain.

The protein belongs to the UPF0237 family.

This is UPF0237 protein PAE3582 from Pyrobaculum aerophilum (strain ATCC 51768 / DSM 7523 / JCM 9630 / CIP 104966 / NBRC 100827 / IM2).